A 265-amino-acid chain; its full sequence is 4-hydroxy-tetrahydrodipicolinate reductase (265 aa).

NAD(+)-binding positions include 7 to 12 and aspartate 33; that span reads GASGRM. Residue arginine 34 participates in NADP(+) binding. NAD(+)-binding positions include 96–98 and 120–123; these read GTT and AANM. Histidine 153 acts as the Proton donor/acceptor in catalysis. (S)-2,3,4,5-tetrahydrodipicolinate is bound at residue histidine 154. The active-site Proton donor is lysine 157. Residue 163 to 164 participates in (S)-2,3,4,5-tetrahydrodipicolinate binding; that stretch reads GT.

This sequence belongs to the DapB family.

The protein localises to the cytoplasm. The catalysed reaction is (S)-2,3,4,5-tetrahydrodipicolinate + NAD(+) + H2O = (2S,4S)-4-hydroxy-2,3,4,5-tetrahydrodipicolinate + NADH + H(+). It carries out the reaction (S)-2,3,4,5-tetrahydrodipicolinate + NADP(+) + H2O = (2S,4S)-4-hydroxy-2,3,4,5-tetrahydrodipicolinate + NADPH + H(+). It participates in amino-acid biosynthesis; L-lysine biosynthesis via DAP pathway; (S)-tetrahydrodipicolinate from L-aspartate: step 4/4. In terms of biological role, catalyzes the conversion of 4-hydroxy-tetrahydrodipicolinate (HTPA) to tetrahydrodipicolinate. The polypeptide is 4-hydroxy-tetrahydrodipicolinate reductase (Burkholderia vietnamiensis (strain G4 / LMG 22486) (Burkholderia cepacia (strain R1808))).